The sequence spans 357 residues: MDIFKELILKHPDENVLISPVSILSTLSILNHGAAGSTAEQLSKYIENVNENTPDDKKDDNNDMDVDIPYCATLATANKIYCSDSIEFHASFLQKIKDGFQTVNFNNANQTKELINEWVKTMTNGKINSLLTSPLSINTRMTVVSAVHFKAMWKYPFSKHLTYTDKFYISKNIVTSVDMMVSTENDLQYVHINELFGGFSIIDIPYEGNSSMVIILPDDIEGIYNIEKNITDEKFKKWCGMLSTKSIDLYMPKFKVEMTEPYNLVPILENLGLTNIFGYYADFSKMCNETITVEKFLHTTFIDVNEEYTEASAVTGVFMTNFSMVYRTKVYINHPFMYMIKDNTGRILFIGKYCYPQ.

The protein belongs to the serpin family. Poxviruses subfamily.

The protein localises to the host cytoplasm. In terms of biological role, this viral protein may be involved in the regulation of the complement cascade. Involved in red pock formation. In Oryctolagus cuniculus (Rabbit), this protein is Serine proteinase inhibitor 1 (SPI-1).